Here is a 179-residue protein sequence, read N- to C-terminus: Protein HEADING DATE 3A (179 aa).

Belongs to the phosphatidylethanolamine-binding protein family. As to expression, expressed in the inner region of the SAM, stem and leaf blade vascular tissues (at protein level).

It localises to the cytoplasm. The protein resides in the nucleus. In terms of biological role, probable mobile flower-promoting signal (florigen) that moves from the leaf to the shoot apical meristem (SAM) and induces flowering. Promotes the transition from vegetative growth to flowering downstream of HD1 and EHD1 under short day (SD) conditions. Acts upstream of MADS14 and MADS15. This Oryza sativa subsp. japonica (Rice) protein is Protein HEADING DATE 3A (HD3A).